The following is a 161-amino-acid chain: Phosphopantetheine adenylyltransferase (161 aa).

Substrate is bound at residue Ser-9. ATP-binding positions include 9-10 (SF) and His-17. Residues Lys-41, Leu-73, and Lys-87 each contribute to the substrate site. Residues 88–90 (GLR), Glu-98, and 122–128 (YSFVSSS) contribute to the ATP site.

It belongs to the bacterial CoaD family. As to quaternary structure, homohexamer. Mg(2+) is required as a cofactor.

The protein resides in the cytoplasm. The catalysed reaction is (R)-4'-phosphopantetheine + ATP + H(+) = 3'-dephospho-CoA + diphosphate. It functions in the pathway cofactor biosynthesis; coenzyme A biosynthesis; CoA from (R)-pantothenate: step 4/5. In terms of biological role, reversibly transfers an adenylyl group from ATP to 4'-phosphopantetheine, yielding dephospho-CoA (dPCoA) and pyrophosphate. This is Phosphopantetheine adenylyltransferase from Mycobacteroides abscessus (strain ATCC 19977 / DSM 44196 / CCUG 20993 / CIP 104536 / JCM 13569 / NCTC 13031 / TMC 1543 / L948) (Mycobacterium abscessus).